A 210-amino-acid polypeptide reads, in one-letter code: Protein RCR2 (210 aa).

The chain crosses the membrane as a helical span at residues 41–61 (WIFFIFFIVALLILLFSTAKV). The interval 125 to 149 (PNGKTEYLAPPPLSEEQASSTDKDL) is disordered. Residue serine 161 is modified to Phosphoserine. The span at 175-199 (NNFVNGQSNRNEQHSPTVESSSFDV) shows a compositional bias: polar residues. A disordered region spans residues 175-210 (NNFVNGQSNRNEQHSPTVESSSFDVNNAPARAKVSK). Threonine 191 is modified (phosphothreonine).

The protein to yeast YBR005W.

Its subcellular location is the membrane. This Saccharomyces cerevisiae (strain ATCC 204508 / S288c) (Baker's yeast) protein is Protein RCR2 (RCR2).